The following is a 163-amino-acid chain: Nucleotide-binding protein CYA_0935 (163 aa).

It belongs to the YajQ family.

Nucleotide-binding protein. This Synechococcus sp. (strain JA-3-3Ab) (Cyanobacteria bacterium Yellowstone A-Prime) protein is Nucleotide-binding protein CYA_0935.